We begin with the raw amino-acid sequence, 411 residues long: Lysosome-associated membrane glycoprotein 2 (411 aa).

The signal sequence occupies residues 1-26; it reads MRLLSPVTGSKLVLLFLFLGAVRSDA. The segment at 27-188 is first lumenal domain; sequence LKLNLTDSKG…SKHEQVCKED (162 aa). Residues 27–376 are Lumenal-facing; that stretch reads LKLNLTDSKG…QDCSADEDNF (350 aa). C38 and C75 are joined by a disulfide. Residues N46, N57, N71, N97, N109, N117, N175, N223, N230, N243, N261, N276, N308, N318, and N357 are each glycosylated (N-linked (GlcNAc...) asparagine). C149 and C185 are joined by a disulfide. The interval 189-229 is hinge; that stretch reads KTATTVAPIIHTTVPSPTTTLTPTSIPVPTPTVGNYTISNG. A second lumenal domain region spans residues 230–376; that stretch reads NATCLLATMG…QDCSADEDNF (147 aa). A disulfide bridge connects residues C233 and C266. Residues C332 and C369 are joined by a disulfide bond. A helical transmembrane segment spans residues 377-400; it reads LVPIAVGAALGGVLILVLLAYFIG. The Cytoplasmic segment spans residues 401-411; that stretch reads LKRHHTGYEQF. The important for binding and subsequent lysosomal degradation of target proteins stretch occupies residues 402-405; it reads KRHH.

It belongs to the LAMP family. As to quaternary structure, monomer. Forms large homooligomers. Interacts (via its cytoplasmic region) with HSPA8; HSPA8 mediates recruitment of proteins with a KFERQ motif to the surface of the lysosome for chaperone-mediated autophagy. Interacts with HSP90 in the lysosome lumen; this enhances LAMP2 stability. Interacts with MLLT11. Interacts with ABCB9. Interacts with FURIN. Interacts with CT55; this interaction may be important for LAMP2 protein stability. Interacts with TMEM175; inhibiting the proton channel activity of TMEM175. Forms a ternary complex with RAB7A and RUFY4 (via RUN domain); the interaction with RAB7A is mediated by RUFY4 (via RUN and coiled coil domains). In terms of processing, extensively N-glycosylated. Contains a minor proportion of O-linked glycans. Contains sialylated glycans. Detected in liver, kidney, spleen and macrophages (at protein level).

Its subcellular location is the lysosome membrane. The protein localises to the endosome membrane. The protein resides in the cell membrane. It is found in the cytoplasmic vesicle. It localises to the autophagosome membrane. Its function is as follows. Lysosomal membrane glycoprotein which plays an important role in lysosome biogenesis, lysosomal pH regulation and autophagy. Acts as an important regulator of lysosomal lumen pH regulation by acting as a direct inhibitor of the proton channel TMEM175, facilitating lysosomal acidification for optimal hydrolase activity. Plays an important role in chaperone-mediated autophagy, a process that mediates lysosomal degradation of proteins in response to various stresses and as part of the normal turnover of proteins with a long biological half-live. Functions by binding target proteins, such as GAPDH, NLRP3 and MLLT11, and targeting them for lysosomal degradation. In the chaperone-mediated autophagy, acts downstream of chaperones, such as HSPA8/HSC70, which recognize and bind substrate proteins and mediate their recruitment to lysosomes, where target proteins bind LAMP2. Plays a role in lysosomal protein degradation in response to starvation. Required for the fusion of autophagosomes with lysosomes during autophagy. Cells that lack LAMP2 express normal levels of VAMP8, but fail to accumulate STX17 on autophagosomes, which is the most likely explanation for the lack of fusion between autophagosomes and lysosomes. Required for normal degradation of the contents of autophagosomes. Required for efficient MHC class II-mediated presentation of exogenous antigens via its function in lysosomal protein degradation; antigenic peptides generated by proteases in the endosomal/lysosomal compartment are captured by nascent MHC II subunits. Is not required for efficient MHC class II-mediated presentation of endogenous antigens. The protein is Lysosome-associated membrane glycoprotein 2 (Lamp2) of Rattus norvegicus (Rat).